A 430-amino-acid chain; its full sequence is Adenylosuccinate synthetase (430 aa).

Residues 13–19 (GDEGKGK) and 41–43 (GHT) contribute to the GTP site. The Proton acceptor role is filled by D14. Mg(2+)-binding residues include D14 and G41. IMP is bound by residues 14–17 (DEGK), 39–42 (NAGH), T130, R144, Q225, T240, and R304. H42 acts as the Proton donor in catalysis. 300-306 (STTGRAR) provides a ligand contact to substrate. GTP contacts are provided by residues R306, 332 to 334 (KLD), and 414 to 416 (STG).

The protein belongs to the adenylosuccinate synthetase family. As to quaternary structure, homodimer. Mg(2+) is required as a cofactor.

It localises to the cytoplasm. It catalyses the reaction IMP + L-aspartate + GTP = N(6)-(1,2-dicarboxyethyl)-AMP + GDP + phosphate + 2 H(+). It functions in the pathway purine metabolism; AMP biosynthesis via de novo pathway; AMP from IMP: step 1/2. In terms of biological role, plays an important role in the de novo pathway of purine nucleotide biosynthesis. Catalyzes the first committed step in the biosynthesis of AMP from IMP. The polypeptide is Adenylosuccinate synthetase (Pseudomonas entomophila (strain L48)).